The following is a 609-amino-acid chain: Replication factor A protein 1 (609 aa).

Residues Gln130 to Gly152 are compositionally biased toward polar residues. The tract at residues Gln130 to Met166 is disordered. Positions Trp192–Asp278 form a DNA-binding region, OB. A C4-type zinc finger spans residues Cys477–Cys498.

It belongs to the replication factor A protein 1 family. As to quaternary structure, component of the heterotrimeric canonical replication protein A complex (RPA).

Its subcellular location is the nucleus. In terms of biological role, as part of the replication protein A (RPA/RP-A), a single-stranded DNA-binding heterotrimeric complex, may play an essential role in DNA replication, recombination and repair. Binds and stabilizes single-stranded DNA intermediates, preventing complementary DNA reannealing and recruiting different proteins involved in DNA metabolism. This is Replication factor A protein 1 (ssb1) from Schizosaccharomyces pombe (strain 972 / ATCC 24843) (Fission yeast).